The chain runs to 85 residues: Large ribosomal subunit protein bL27 (85 aa).

Belongs to the bacterial ribosomal protein bL27 family.

This is Large ribosomal subunit protein bL27 from Campylobacter curvus (strain 525.92).